Reading from the N-terminus, the 550-residue chain is Glucose-6-phosphate isomerase (550 aa).

Glu356 (proton donor) is an active-site residue. Catalysis depends on residues His387 and Lys515.

The protein belongs to the GPI family.

It localises to the cytoplasm. It catalyses the reaction alpha-D-glucose 6-phosphate = beta-D-fructose 6-phosphate. It functions in the pathway carbohydrate biosynthesis; gluconeogenesis. It participates in carbohydrate degradation; glycolysis; D-glyceraldehyde 3-phosphate and glycerone phosphate from D-glucose: step 2/4. Catalyzes the reversible isomerization of glucose-6-phosphate to fructose-6-phosphate. The protein is Glucose-6-phosphate isomerase of Vibrio parahaemolyticus serotype O3:K6 (strain RIMD 2210633).